Consider the following 426-residue polypeptide: Enolase (426 aa).

(2R)-2-phosphoglycerate is bound at residue Gln-163. The active-site Proton donor is the Glu-205. Mg(2+)-binding residues include Asp-242, Glu-286, and Asp-313. (2R)-2-phosphoglycerate is bound by residues Lys-338, Arg-367, Ser-368, and Lys-389. The active-site Proton acceptor is Lys-338.

It belongs to the enolase family. The cofactor is Mg(2+).

It localises to the cytoplasm. The protein localises to the secreted. The protein resides in the cell surface. It catalyses the reaction (2R)-2-phosphoglycerate = phosphoenolpyruvate + H2O. The protein operates within carbohydrate degradation; glycolysis; pyruvate from D-glyceraldehyde 3-phosphate: step 4/5. Its function is as follows. Catalyzes the reversible conversion of 2-phosphoglycerate (2-PG) into phosphoenolpyruvate (PEP). It is essential for the degradation of carbohydrates via glycolysis. This chain is Enolase, found in Gemmatimonas aurantiaca (strain DSM 14586 / JCM 11422 / NBRC 100505 / T-27).